The following is a 377-amino-acid chain: MAKQDYYEILGVSKTAEEREIKKAYKRLAMKYHPDRNQGDKEAEAKFKEIKEAYEILTDAQKRAAYDQYGHAAFEQGGMGGGGGFGGGADFSDIFGDVFGDIFGGGRGRQRAARGADLRYNMELTLEEAVRGVTKEIRIPTLEECDVCHGSGAKAGSKPQTCPTCHGAGQVQMRQGFFAVQQTCPHCQGRGTLIKDPCNKCHGHGRVEKTKTLSVKIPAGVDTGDRIRLAGEGEAGEHGAPAGDLYVQVQVKQHAIFEREGNNLYCEVPINFTMAALGGEIEVPTLDGRVNLKIPGETQTGKLFRMRGKGVKSVRGGAQGDLLCRVVVETPVGLNEKQKQLLKELQESFGGPTGENNSPRSKSFFDGVKKFFDDLTR.

The region spanning 5-70 (DYYEILGVSK…QKRAAYDQYG (66 aa)) is the J domain. The CR-type zinc finger occupies 132-210 (GVTKEIRIPT…CHGHGRVEKT (79 aa)). Zn(2+) contacts are provided by Cys-145, Cys-148, Cys-162, Cys-165, Cys-184, Cys-187, Cys-198, and Cys-201. 4 CXXCXGXG motif repeats span residues 145–152 (CDVCHGSG), 162–169 (CPTCHGAG), 184–191 (CPHCQGRG), and 198–205 (CNKCHGHG).

It belongs to the DnaJ family. In terms of assembly, homodimer. It depends on Zn(2+) as a cofactor.

The protein resides in the cytoplasm. Its function is as follows. Participates actively in the response to hyperosmotic and heat shock by preventing the aggregation of stress-denatured proteins and by disaggregating proteins, also in an autonomous, DnaK-independent fashion. Unfolded proteins bind initially to DnaJ; upon interaction with the DnaJ-bound protein, DnaK hydrolyzes its bound ATP, resulting in the formation of a stable complex. GrpE releases ADP from DnaK; ATP binding to DnaK triggers the release of the substrate protein, thus completing the reaction cycle. Several rounds of ATP-dependent interactions between DnaJ, DnaK and GrpE are required for fully efficient folding. Also involved, together with DnaK and GrpE, in the DNA replication of plasmids through activation of initiation proteins. In Klebsiella pneumoniae subsp. pneumoniae (strain ATCC 700721 / MGH 78578), this protein is Chaperone protein DnaJ.